We begin with the raw amino-acid sequence, 249 residues long: Aspartate/glutamate leucyltransferase (249 aa).

This sequence belongs to the R-transferase family. Bpt subfamily.

It is found in the cytoplasm. The enzyme catalyses N-terminal L-glutamyl-[protein] + L-leucyl-tRNA(Leu) = N-terminal L-leucyl-L-glutamyl-[protein] + tRNA(Leu) + H(+). It carries out the reaction N-terminal L-aspartyl-[protein] + L-leucyl-tRNA(Leu) = N-terminal L-leucyl-L-aspartyl-[protein] + tRNA(Leu) + H(+). Functions in the N-end rule pathway of protein degradation where it conjugates Leu from its aminoacyl-tRNA to the N-termini of proteins containing an N-terminal aspartate or glutamate. This is Aspartate/glutamate leucyltransferase from Brucella abortus (strain S19).